Reading from the N-terminus, the 651-residue chain is E3 SUMO-protein ligase PIAS1 (651 aa).

Position 2 is an N-acetylalanine (alanine 2). The required for interaction with MSX1 stretch occupies residues 2–200 (ADSAELKQMV…KCDFTVQVQL (199 aa)). One can recognise an SAP domain in the interval 11–45 (VMSLRVSELQVLLGYAGRNKHGRKHELLTKALHLL). Positions 19-23 (LQVLL) match the LXXLL motif motif. Glycyl lysine isopeptide (Lys-Gly) (interchain with G-Cter in SUMO2) cross-links involve residues lysine 40 and lysine 46. The Nuclear localization signal signature appears at 56–64 (KIKELYRRR). Residues 124–288 (HLTSALHPVH…SMAVYLVKQL (165 aa)) form the PINIT domain. Glycyl lysine isopeptide (Lys-Gly) (interchain with G-Cter in SUMO2) cross-links involve residues lysine 137 and lysine 238. The SP-RING-type zinc-finger motif lies at 320–405 (PDSEIATTSL…LKYCTDCDEI (86 aa)). Cysteine 351, histidine 353, cysteine 374, and cysteine 377 together coordinate Zn(2+). Positions 368–380 (KKPTWVCPVCDKK) match the Nuclear localization signal motif. Lysine 453 is covalently cross-linked (Glycyl lysine isopeptide (Lys-Gly) (interchain with G-Cter in SUMO2)). The interval 462-473 (LTIDSSSDEEEE) is SUMO1-binding. The tract at residues 465–511 (DSSSDEEEEEPSAKRTCPSLSPTSPLNNKGILSLPHQASPVSRTPSL) is disordered. A phosphoserine mark is found at serine 467, serine 468, serine 483, and serine 485. Residues 482–491 (PSLSPTSPLN) show a composition bias toward polar residues. Position 487 is a phosphothreonine (threonine 487). Serine 488 is modified (phosphoserine). Residue lysine 493 forms a Glycyl lysine isopeptide (Lys-Gly) (interchain with G-Cter in SUMO2) linkage. 3 positions are modified to phosphoserine: serine 503, serine 510, and serine 522. Tandem repeats lie at residues 520 to 523 (NTSL) and 557 to 560 (NTSL). Residues 520–615 (NTSLIQDYRH…GSSSGSNSSL (96 aa)) are 4 X 4 AA repeats of N-T-S-L. Residues 598 to 601 (STSL) form a 3; approximate repeat. A compositionally biased stretch (low complexity) spans 599–621 (TSLPTTNGSSSGSNSSLVSSNSL). The tract at residues 599–632 (TSLPTTNGSSSGSNSSLVSSNSLRESHSHTVTNR) is disordered. Residues 612–615 (NSSL) form a 4; approximate repeat.

It belongs to the PIAS family. Interacts with NCOA2 and AR. Interacts with NR2C1; the interaction promotes its sumoylation. Interacts with DDX21, CSRP2, AXIN1, JUN, UBE2I, SUMO1, SATB2, PLAG1, TP53 and STAT1 (dimer), following IFNA1-stimulation. Interacts with SP3 (preferentially when SUMO-modified). Interacts with KLF8; the interaction results in SUMO ligation and repression of KLF8 transcriptional activity and of its cell cycle progression into G(1) phase. Interacts with CHUK/IKKA; this interaction induces PIAS1 phosphorylation. Interacts with PTK2/FAK1; the interaction promotes its sumoylation. Interacts with DDX5. Interacts with PML. Interacts with MTA1. Interacts with SUMO1P1/SUMO5. Interacts with PRDM1/Blimp-1. Interacts (via N-terminus) with MSX1 (via C-terminus); the interaction is required for the localization of both proteins to the nuclear periphery and specific binding of MSX1 to the core enhancer region in target gene promoters. In terms of assembly, (Microbial infection) Interacts with ebolavirus VP35; this interaction mediates the sumoylation of IRF7 and contributes to the viral inhibition of IFN-type I production. In terms of processing, sumoylated. In terms of tissue distribution, expressed in numerous tissues with highest level in testis.

The protein localises to the nucleus. The protein resides in the nucleus speckle. It localises to the PML body. It is found in the cytoplasm. Its subcellular location is the cytoskeleton. The protein operates within protein modification; protein sumoylation. Functionally, functions as an E3-type small ubiquitin-like modifier (SUMO) ligase, stabilizing the interaction between UBE2I and the substrate, and as a SUMO-tethering factor. Catalyzes sumoylation of various proteins, such as CEBPB, MRE11, MTA1, PTK2 and PML. Plays a crucial role as a transcriptional coregulation in various cellular pathways, including the STAT pathway, the p53 pathway and the steroid hormone signaling pathway. In vitro, binds A/T-rich DNA. The effects of this transcriptional coregulation, transactivation or silencing, may vary depending upon the biological context. Mediates sumoylation of MRE11, stabilizing MRE11 on chromatin during end resection. Sumoylates PML (at 'Lys-65' and 'Lys-160') and PML-RAR and promotes their ubiquitin-mediated degradation. PIAS1-mediated sumoylation of PML promotes its interaction with CSNK2A1/CK2 which in turn promotes PML phosphorylation and degradation. Enhances the sumoylation of MTA1 and may participate in its paralog-selective sumoylation. Plays a dynamic role in adipogenesis by promoting the SUMOylation and degradation of CEBPB. Mediates the nuclear mobility and localization of MSX1 to the nuclear periphery, whereby MSX1 is brought into the proximity of target myoblast differentiation factor genes. Also required for the binding of MSX1 to the core enhancer region in target gene promoter regions, independent of its sumoylation activity. Capable of binding to the core enhancer region TAAT box in the MYOD1 gene promoter. Its function is as follows. (Microbial infection) Restricts Epstein-Barr virus (EBV) lytic replication by acting as an inhibitor for transcription factors involved in lytic gene expression. The virus can use apoptotic caspases to antagonize PIAS1-mediated restriction and express its lytic genes. This chain is E3 SUMO-protein ligase PIAS1 (PIAS1), found in Homo sapiens (Human).